Here is a 478-residue protein sequence, read N- to C-terminus: Protein nucleotidyltransferase YdiU (478 aa).

G84, G86, R87, K107, D119, G120, R170, and R177 together coordinate ATP. The Proton acceptor role is filled by D246. N247 and D256 together coordinate Mg(2+). ATP is bound at residue D256.

It belongs to the SELO family. Requires Mg(2+) as cofactor. It depends on Mn(2+) as a cofactor.

It catalyses the reaction L-seryl-[protein] + ATP = 3-O-(5'-adenylyl)-L-seryl-[protein] + diphosphate. The catalysed reaction is L-threonyl-[protein] + ATP = 3-O-(5'-adenylyl)-L-threonyl-[protein] + diphosphate. The enzyme catalyses L-tyrosyl-[protein] + ATP = O-(5'-adenylyl)-L-tyrosyl-[protein] + diphosphate. It carries out the reaction L-histidyl-[protein] + UTP = N(tele)-(5'-uridylyl)-L-histidyl-[protein] + diphosphate. It catalyses the reaction L-seryl-[protein] + UTP = O-(5'-uridylyl)-L-seryl-[protein] + diphosphate. The catalysed reaction is L-tyrosyl-[protein] + UTP = O-(5'-uridylyl)-L-tyrosyl-[protein] + diphosphate. Its function is as follows. Nucleotidyltransferase involved in the post-translational modification of proteins. It can catalyze the addition of adenosine monophosphate (AMP) or uridine monophosphate (UMP) to a protein, resulting in modifications known as AMPylation and UMPylation. This is Protein nucleotidyltransferase YdiU from Shigella boydii serotype 4 (strain Sb227).